The chain runs to 197 residues: Rac-like GTP-binding protein RHO1 (197 aa).

13-20 (GDGAVGKT) is a GTP binding site. The Effector region motif lies at 35-43 (YVPTVFDNF). Residues 60–64 (DTAGQ) and 118–121 (TKLD) each bind GTP. The residue at position 194 (cysteine 194) is a Cysteine methyl ester. Cysteine 194 carries S-geranylgeranyl cysteine lipidation. Residues 195–197 (SIL) constitute a propeptide, removed in mature form.

The protein belongs to the small GTPase superfamily. Rho family.

The protein resides in the cytoplasm. Its subcellular location is the membrane. In terms of biological role, inactive GDP-bound Rho GTPases reside in the cytosol, are found in a complex with Rho GDP-dissociation inhibitors (Rho GDIs), and are released from the GDI protein in order to translocate to membranes upon activation. This Beta vulgaris (Sugar beet) protein is Rac-like GTP-binding protein RHO1 (RHO1).